The chain runs to 799 residues: 1-phosphatidylinositol 4,5-bisphosphate phosphodiesterase delta-4 (799 aa).

The region spanning 16–124 (LLMQEGMPMR…WMRGLHLLVD (109 aa)) is the PH domain. The tract at residues 26 to 53 (KVRSKSWKKLRYFRLQNDGMTVWHARQA) is substrate binding. 3 EF-hand domains span residues 134-169 (RLDQ…MNVE), 170-205 (MDQE…LTKR), and 206-237 (AEVQ…EQKE). Residues Asp147, Asn149, Asp151, Lys153, Glu158, Asp183, Ser185, Ser187, Thr189, and Glu194 each coordinate Ca(2+). The GBA motif lies at 213–243 (ESFSADGQKLTLLEFSDFLREEQKERDCTSE). One can recognise a PI-PLC X-box domain in the interval 290-435 (QDMTQPLNHY…LRRKILVKGK (146 aa)). His305 is an active-site residue. Ca(2+) is bound by residues Asn306, Glu335, and Asp337. His350 is an active-site residue. Glu384 provides a ligand contact to Ca(2+). The substrate site is built by Lys433 and Lys435. The residue at position 460 (Ser460) is a Phosphoserine. A PI-PLC Y-box domain is found at 530–646 (LSSLVIYLKS…GYVLKPDFLR (117 aa)). Substrate-binding residues include Ser559 and Arg586. Residues 646–773 (RDNQSSFHPE…QGYRHIHLLS (128 aa)) enclose the C2 domain. Residues Ile687, Asp689, Asn713, Asp742, Tyr743, and Asp744 each contribute to the Ca(2+) site. A PDZ-binding motif is present at residues 768–771 (HIHL).

As to quaternary structure, interacts with GRIP1. Interacts (via GBA motif) with guanine nucleotide-binding protein G(i) alpha subunit GNAI3 (inactive GDP-bound form); low-affinity interaction. Requires Ca(2+) as cofactor.

The protein resides in the membrane. It localises to the nucleus. The protein localises to the cytoplasm. It is found in the endoplasmic reticulum. It carries out the reaction a 1,2-diacyl-sn-glycero-3-phospho-(1D-myo-inositol-4,5-bisphosphate) + H2O = 1D-myo-inositol 1,4,5-trisphosphate + a 1,2-diacyl-sn-glycerol + H(+). The enzyme catalyses a 1,2-diacyl-sn-glycero-3-phospho-(1D-myo-inositol) + H2O = 1D-myo-inositol 1-phosphate + a 1,2-diacyl-sn-glycerol + H(+). Hydrolyzes the phosphatidylinositol 4,5-bisphosphate (PIP2) to generate 2 second messenger molecules diacylglycerol (DAG) and inositol 1,4,5-trisphosphate (IP3). DAG mediates the activation of protein kinase C (PKC), while IP3 releases Ca(2+) from intracellular stores. Required for acrosome reaction in sperm during fertilization, probably by acting as an important enzyme for intracellular Ca(2+) mobilization in the zona pellucida-induced acrosome reaction. May play a role in cell growth. Modulates the liver regeneration in cooperation with nuclear PKC. Overexpression up-regulates the Erk signaling pathway and proliferation. The polypeptide is 1-phosphatidylinositol 4,5-bisphosphate phosphodiesterase delta-4 (PLCD4) (Macaca fascicularis (Crab-eating macaque)).